Here is a 118-residue protein sequence, read N- to C-terminus: Ribosome-binding factor A (118 aa).

This sequence belongs to the RbfA family. In terms of assembly, monomer. Binds 30S ribosomal subunits, but not 50S ribosomal subunits or 70S ribosomes.

It is found in the cytoplasm. Its function is as follows. One of several proteins that assist in the late maturation steps of the functional core of the 30S ribosomal subunit. Associates with free 30S ribosomal subunits (but not with 30S subunits that are part of 70S ribosomes or polysomes). Required for efficient processing of 16S rRNA. May interact with the 5'-terminal helix region of 16S rRNA. This chain is Ribosome-binding factor A, found in Bacillus cereus (strain ATCC 10987 / NRS 248).